A 156-amino-acid polypeptide reads, in one-letter code: Transcriptional repressor NrdR (156 aa).

A zinc finger lies at Cys3–Cys34. In terms of domain architecture, ATP-cone spans Leu49 to Asp139.

It belongs to the NrdR family. Zn(2+) serves as cofactor.

Its function is as follows. Negatively regulates transcription of bacterial ribonucleotide reductase nrd genes and operons by binding to NrdR-boxes. The protein is Transcriptional repressor NrdR of Jannaschia sp. (strain CCS1).